The sequence spans 68 residues: Large ribosomal subunit protein uL29 (68 aa).

It belongs to the universal ribosomal protein uL29 family.

This chain is Large ribosomal subunit protein uL29, found in Methanobrevibacter smithii (strain ATCC 35061 / DSM 861 / OCM 144 / PS).